The primary structure comprises 118 residues: MKIVALTLVAFVALAGASCPYAAPAQAYSAPAAPSGYPAPPCPTNYLFSCQPNLAPAPCAQEAQAPAYGSAGAYTEQVPRYVGSPNREQVQQFHQRIGMAALMEELRGLGQGIQGQQY.

The signal sequence occupies residues Met1–Ala17. Residues Gly36 to Thr75 enclose the VM domain.

It belongs to the vitelline membrane family.

It localises to the secreted. Major early eggshell protein. In Drosophila sechellia (Fruit fly), this protein is Vitelline membrane protein Vm32E.